We begin with the raw amino-acid sequence, 361 residues long: Protein phosphatase 1 regulatory subunit 7 (361 aa).

The disordered stretch occupies residues 1–64; it reads MAAERGAGQQ…RGAEDPEEEH (64 aa). Residue alanine 2 is modified to N-acetylalanine. Serine 12, serine 24, serine 27, serine 45, and serine 48 each carry phosphoserine. A compositionally biased stretch (basic and acidic residues) spans 17-34; it reads EVDRRVESEESGDEEGKK. A compositionally biased stretch (basic and acidic residues) spans 48–58; the sequence is SLKDGVDRGAE. 11 LRR repeats span residues 78–99, 100–121, 122–143, 144–165, 166–187, 188–209, 210–231, 232–253, 254–275, 276–297, and 298–319; these read DAED…EVLK, KVKS…EELQ, SLRE…EALT, ELEV…DKLT, QLKK…SNLH, QLQM…DTLT, NLES…DALT, NLTV…QSLV, NLRE…ENNN, KLTM…SHLT, and ELQE…DELK. Serine 323 is subject to Phosphoserine. An LRRCT domain is found at 332–361; sequence NPLQKDPQYRRKVMLALPSVRQIDATYVRF.

The protein belongs to the SDS22 family. Interacts with PPP1CA, PPP1CB and PPP1CC/PPP1G. As to expression, widely expressed with high level in testis. Expression increases during puberty. Expressed in spermatids and probably also in spermatozoa.

It localises to the nucleus. Functionally, regulatory subunit of protein phosphatase 1. The sequence is that of Protein phosphatase 1 regulatory subunit 7 (Ppp1r7) from Mus musculus (Mouse).